Reading from the N-terminus, the 319-residue chain is Free fatty acid receptor 3 (319 aa).

Residues Met1 to Ser15 lie on the Extracellular side of the membrane. Residues Val16–Val36 form a helical membrane-spanning segment. Residues Gly37 to Pro43 are Cytoplasmic-facing. Residues Val44 to Leu64 traverse the membrane as a helical segment. Topologically, residues Pro65–Thr98 are extracellular. Cys84 and Cys165 are oxidised to a cystine. The helical transmembrane segment at Ser99–Tyr119 threads the bilayer. The Cytoplasmic segment spans residues Lys120–Gln127. A helical transmembrane segment spans residues Ala128–Ile148. Topologically, residues Thr149–Glu183 are extracellular. N-linked (GlcNAc...) asparagine glycans are attached at residues Asn154 and Asn162. A helical membrane pass occupies residues Met184 to Ile206. Topologically, residues Leu207 to Arg218 are cytoplasmic. A helical membrane pass occupies residues Ile219 to Met239. Residues Ser240–Arg254 are Extracellular-facing. A helical transmembrane segment spans residues Ser255 to Ser275. Residues Ser276–Ser319 are Cytoplasmic-facing.

Belongs to the G-protein coupled receptor 1 family. Expressed in white adipose tissue and skeletal muscle (at protein level). Abundantly expressed in sympathetic ganglia such as the superior cervical ganglion. Also expressed by intestinal endocrine cells.

Its subcellular location is the cell membrane. G protein-coupled receptor that is activated by a major product of dietary fiber digestion, the short chain fatty acids (SCFAs), and that plays a role in the regulation of whole-body energy homeostasis and in intestinal immunity. In omnivorous mammals, the short chain fatty acids acetate, propionate and butyrate are produced primarily by the gut microbiome that metabolizes dietary fibers. SCFAs serve as a source of energy but also act as signaling molecules. That G protein-coupled receptor is probably coupled to the pertussis toxin-sensitive, G(i/o)-alpha family of G proteins. Its activation results in the formation of inositol 1,4,5-trisphosphate, the mobilization of intracellular calcium, the phosphorylation of the MAPK3/ERK1 and MAPK1/ERK2 kinases and the inhibition of intracellular cAMP accumulation. Activated by SCFAs and by beta-hydroxybutyrate, a ketone body produced by the liver upon starvation, it inhibits N-type calcium channels and modulates the activity of sympathetic neurons through a signaling cascade involving the beta and gamma subunits of its coupled G protein, phospholipase C and MAP kinases. Thereby, it may regulate energy expenditure through the control of the sympathetic nervous system that controls for instance heart rate. Upon activation by SCFAs accumulating in the intestine, it may also signal to the brain via neural circuits which in turn would regulate intestinal gluconeogenesis. May also control the production of hormones involved in whole-body energy homeostasis. May for instance, regulate blood pressure through renin secretion. May also regulate secretion of the PYY peptide by enteroendocrine cells and control gut motility, intestinal transit rate, and the harvesting of energy from SCFAs produced by gut microbiota. May also indirectly regulate the production of LEP/Leptin, a hormone acting on the CNS to inhibit food intake, in response to the presence of short-chain fatty acids in the intestine. Finally, may also play a role in glucose homeostasis. Besides its role in energy homeostasis, may play a role in intestinal immunity. May mediate the activation of the inflammatory and immune response by SCFAs in the gut, regulating the rapid production of chemokines and cytokines by intestinal epithelial cells. Exhibits an SCFA-independent constitutive G protein-coupled receptor activity. The sequence is that of Free fatty acid receptor 3 (Ffar3) from Mus musculus (Mouse).